A 471-amino-acid polypeptide reads, in one-letter code: ATP synthase subunit beta (471 aa).

153 to 160 is a binding site for ATP; the sequence is GGAGVGKT.

It belongs to the ATPase alpha/beta chains family. As to quaternary structure, F-type ATPases have 2 components, CF(1) - the catalytic core - and CF(0) - the membrane proton channel. CF(1) has five subunits: alpha(3), beta(3), gamma(1), delta(1), epsilon(1). CF(0) has four main subunits: a(1), b(1), b'(1) and c(9-12).

The protein localises to the cell membrane. It carries out the reaction ATP + H2O + 4 H(+)(in) = ADP + phosphate + 5 H(+)(out). Produces ATP from ADP in the presence of a proton gradient across the membrane. The catalytic sites are hosted primarily by the beta subunits. This Chloroflexus aggregans (strain MD-66 / DSM 9485) protein is ATP synthase subunit beta.